A 96-amino-acid polypeptide reads, in one-letter code: Small ribosomal subunit protein bS6 (96 aa).

Belongs to the bacterial ribosomal protein bS6 family.

In terms of biological role, binds together with bS18 to 16S ribosomal RNA. The polypeptide is Small ribosomal subunit protein bS6 (Natranaerobius thermophilus (strain ATCC BAA-1301 / DSM 18059 / JW/NM-WN-LF)).